The following is a 753-amino-acid chain: Probable dipeptidyl peptidase 4 (753 aa).

The first 18 residues, 1 to 18 (MKTSQFLSLLLLAGIAQA), serve as a signal peptide directing secretion. Asn84, Asn114, and Asn222 each carry an N-linked (GlcNAc...) asparagine glycan. Active-site charge relay system residues include Ser616, Asp668, and His703.

The protein belongs to the peptidase S9B family.

The protein resides in the secreted. It carries out the reaction Release of an N-terminal dipeptide, Xaa-Yaa-|-Zaa-, from a polypeptide, preferentially when Yaa is Pro, provided Zaa is neither Pro nor hydroxyproline.. Extracellular dipeptidyl-peptidase which removes N-terminal dipeptides sequentially from polypeptides having unsubstituted N-termini provided that the penultimate residue is proline. Contributes to pathogenicity. The sequence is that of Probable dipeptidyl peptidase 4 (DPP4) from Trichophyton verrucosum (strain HKI 0517).